The chain runs to 189 residues: MTQLLIIFAAAAAGLFFFEDVRDVLKLWDIRDMRIIWYGVSIAVIVILADMAVMKWFPSHLYDDGGINKKIFSKRSIPHIIFLTLLIAFAEEMLFRGVLQTHIGLWTASLIFAALHFRYLSKWLLFIMVTAISFLLGLMYEWTGNLFVPMTAHFIIDAVFACQIRFEHVRRDKHDEHVESREKKSPESL.

4 consecutive transmembrane segments (helical) span residues 35 to 55 (IIWY…AVMK), 97 to 117 (GVLQ…ALHF), 123 to 143 (WLLF…YEWT), and 144 to 164 (GNLF…ACQI).

It localises to the cell membrane. This is an uncharacterized protein from Bacillus subtilis (strain 168).